The sequence spans 180 residues: Calcineurin subunit B type 1 (180 aa).

Residue Gly-2 is the site of N-myristoyl glycine attachment. 4 EF-hand domains span residues 25–60 (AELK…ALNP), 62–92 (LERV…LSHK), 94–129 (TKED…MVGT), and 135–170 (QLQQ…QEGI). Asp-38, Asp-40, Ser-42, Thr-44, Glu-49, Asp-70, Asn-72, Asp-74, Glu-76, Glu-81, Asp-107, Asp-109, Asp-111, and Glu-118 together coordinate Ca(2+). Residues 138-143 (QIVDKT) form a canA/calcineurin A binding region. Residues Asp-148, Asp-150, Asp-152, Lys-154, and Glu-159 each contribute to the Ca(2+) site.

It belongs to the calcineurin regulatory subunit family. As to quaternary structure, forms a complex composed of a calmodulin-dependent catalytic subunit canA (also known as calcineurin A) and a regulatory Ca(2+)-binding subunit cnbA (also known as calcineurin B).

In terms of biological role, regulatory subunit of calcineurin, a calcium-dependent, calmodulin stimulated protein phosphatase. Confers calcium sensitivity. Important for stalk formation. This Dictyostelium discoideum (Social amoeba) protein is Calcineurin subunit B type 1 (cnbA).